The sequence spans 660 residues: Acetyl-coenzyme A synthetase (660 aa).

CoA contacts are provided by residues 197 to 200 (RGGK) and T317. ATP contacts are provided by residues 397–399 (GEP), 421–426 (DTWWQT), D512, and R528. CoA is bound at residue S536. R539 contacts ATP. V550 and V555 together coordinate Mg(2+). The residue at position 625 (K625) is an N6-acetyllysine.

This sequence belongs to the ATP-dependent AMP-binding enzyme family. Mg(2+) is required as a cofactor. Post-translationally, acetylated. Deacetylation by the SIR2-homolog deacetylase activates the enzyme.

It catalyses the reaction acetate + ATP + CoA = acetyl-CoA + AMP + diphosphate. Its function is as follows. Catalyzes the conversion of acetate into acetyl-CoA (AcCoA), an essential intermediate at the junction of anabolic and catabolic pathways. AcsA undergoes a two-step reaction. In the first half reaction, AcsA combines acetate with ATP to form acetyl-adenylate (AcAMP) intermediate. In the second half reaction, it can then transfer the acetyl group from AcAMP to the sulfhydryl group of CoA, forming the product AcCoA. This Paraburkholderia phymatum (strain DSM 17167 / CIP 108236 / LMG 21445 / STM815) (Burkholderia phymatum) protein is Acetyl-coenzyme A synthetase.